A 502-amino-acid polypeptide reads, in one-letter code: Glycerol kinase (502 aa).

Thr-14 contacts ADP. ATP contacts are provided by Thr-14, Thr-15, and Ser-16. Residue Thr-14 participates in sn-glycerol 3-phosphate binding. Arg-18 is a binding site for ADP. 4 residues coordinate sn-glycerol 3-phosphate: Arg-84, Glu-85, Tyr-136, and Asp-246. Arg-84, Glu-85, Tyr-136, Asp-246, and Gln-247 together coordinate glycerol. 2 residues coordinate ADP: Thr-268 and Gly-311. Thr-268, Gly-311, Gln-315, and Gly-412 together coordinate ATP. ADP-binding residues include Gly-412 and Asn-416.

Belongs to the FGGY kinase family. In terms of assembly, homotetramer and homodimer (in equilibrium). Heterodimer with EIIA-Glc. Binds 1 zinc ion per glycerol kinase EIIA-Glc dimer. The zinc ion is important for dimerization.

It carries out the reaction glycerol + ATP = sn-glycerol 3-phosphate + ADP + H(+). Its pathway is polyol metabolism; glycerol degradation via glycerol kinase pathway; sn-glycerol 3-phosphate from glycerol: step 1/1. Activity of this regulatory enzyme is affected by several metabolites. Allosterically and non-competitively inhibited by fructose 1,6-bisphosphate (FBP) and unphosphorylated phosphocarrier protein EIIA-Glc (III-Glc), an integral component of the bacterial phosphotransferase (PTS) system. In terms of biological role, key enzyme in the regulation of glycerol uptake and metabolism. Catalyzes the phosphorylation of glycerol to yield sn-glycerol 3-phosphate. This is Glycerol kinase from Salmonella heidelberg (strain SL476).